Reading from the N-terminus, the 313-residue chain is Biotin synthase (313 aa).

The Radical SAM core domain maps to Asn28 to Ser258. [4Fe-4S] cluster-binding residues include Cys46, Cys50, and Cys53. [2Fe-2S] cluster contacts are provided by Cys90, Cys121, Cys181, and Arg256.

It belongs to the radical SAM superfamily. Biotin synthase family. Homodimer. It depends on [4Fe-4S] cluster as a cofactor. [2Fe-2S] cluster is required as a cofactor.

It catalyses the reaction (4R,5S)-dethiobiotin + (sulfur carrier)-SH + 2 reduced [2Fe-2S]-[ferredoxin] + 2 S-adenosyl-L-methionine = (sulfur carrier)-H + biotin + 2 5'-deoxyadenosine + 2 L-methionine + 2 oxidized [2Fe-2S]-[ferredoxin]. It participates in cofactor biosynthesis; biotin biosynthesis; biotin from 7,8-diaminononanoate: step 2/2. Functionally, catalyzes the conversion of dethiobiotin (DTB) to biotin by the insertion of a sulfur atom into dethiobiotin via a radical-based mechanism. The polypeptide is Biotin synthase (Francisella tularensis subsp. tularensis (strain WY96-3418)).